The following is a 152-amino-acid chain: 3-hydroxyacyl-[acyl-carrier-protein] dehydratase FabZ (152 aa).

His54 is a catalytic residue.

Belongs to the thioester dehydratase family. FabZ subfamily.

It localises to the cytoplasm. It catalyses the reaction a (3R)-hydroxyacyl-[ACP] = a (2E)-enoyl-[ACP] + H2O. Involved in unsaturated fatty acids biosynthesis. Catalyzes the dehydration of short chain beta-hydroxyacyl-ACPs and long chain saturated and unsaturated beta-hydroxyacyl-ACPs. This chain is 3-hydroxyacyl-[acyl-carrier-protein] dehydratase FabZ, found in Shewanella woodyi (strain ATCC 51908 / MS32).